The following is a 397-amino-acid chain: 4-O-methyl-glucuronoyl methylesterase (397 aa).

The signal sequence occupies residues Met1 to Ala18. 3 disulfide bridges follow: Cys31-Cys65, Cys212-Cys347, and Cys244-Cys319. A GXSYXG catalytic site motif motif is present at residues Gly211–Gly216. Ser213 functions as the Nucleophile in the catalytic mechanism. Substrate-binding residues include Lys217, Gln259, Glu267, and Trp310. The Proton donor/acceptor role is filled by His346.

The protein belongs to the carbohydrate esterase 15 (CE15) family.

The protein resides in the secreted. The enzyme catalyses a 4-O-methyl-alpha-D-glucuronosyl ester derivative + H2O = 4-O-methyl-alpha-D-glucuronate derivative + an alcohol + H(+). Functionally, glucuronoyl esterase which may play a significant role in biomass degradation, as it is considered to disconnect hemicellulose from lignin through the hydrolysis of the ester bond between 4-O-methyl-D-glucuronic acid residues of glucuronoxylans and aromatic alcohols of lignin. The polypeptide is 4-O-methyl-glucuronoyl methylesterase (ge2) (Thermothelomyces thermophilus (strain ATCC 42464 / BCRC 31852 / DSM 1799) (Sporotrichum thermophile)).